Consider the following 140-residue polypeptide: Holo-[acyl-carrier-protein] synthase (140 aa).

2 residues coordinate Mg(2+): Asp-8 and Glu-57.

The protein belongs to the P-Pant transferase superfamily. AcpS family. Requires Mg(2+) as cofactor.

It is found in the cytoplasm. It carries out the reaction apo-[ACP] + CoA = holo-[ACP] + adenosine 3',5'-bisphosphate + H(+). In terms of biological role, transfers the 4'-phosphopantetheine moiety from coenzyme A to a Ser of acyl-carrier-protein. The chain is Holo-[acyl-carrier-protein] synthase from Beijerinckia indica subsp. indica (strain ATCC 9039 / DSM 1715 / NCIMB 8712).